Here is a 544-residue protein sequence, read N- to C-terminus: Peptide chain release factor 3 (544 aa).

The region spanning 17 to 286 is the tr-type G domain; it reads EKRRNFAIIS…SFLDYGLAPR (270 aa). GTP is bound by residues 26–33, 94–98, and 148–151; these read SHPDAGKT, DTPGH, and NKMD.

The protein belongs to the TRAFAC class translation factor GTPase superfamily. Classic translation factor GTPase family. PrfC subfamily.

It localises to the cytoplasm. Functionally, increases the formation of ribosomal termination complexes and stimulates activities of RF-1 and RF-2. It binds guanine nucleotides and has strong preference for UGA stop codons. It may interact directly with the ribosome. The stimulation of RF-1 and RF-2 is significantly reduced by GTP and GDP, but not by GMP. The polypeptide is Peptide chain release factor 3 (Microcystis aeruginosa (strain NIES-843 / IAM M-2473)).